We begin with the raw amino-acid sequence, 206 residues long: uncharacterized protein (206 aa).

The signal sequence occupies residues 1–17; sequence MKGKILFALFLSAGVIA. C18 carries N-palmitoyl cysteine lipidation. C18 carries S-diacylglycerol cysteine lipidation. The stretch at 21 to 58 forms a coiled coil; sequence ASQAAKQQEVKVAKAETKTKKKESKAEKFRKALAAQDK. The Cytochrome c domain maps to 97-201; it reads GDWRKGESLA…DIVAYLHDPE (105 aa). The heme c site is built by C127, C130, and H131.

The protein resides in the cell membrane. This is an uncharacterized protein from Aquifex aeolicus (strain VF5).